The sequence spans 277 residues: Large ribosomal subunit protein uL2 (277 aa).

The disordered stretch occupies residues 199–277 (DHGNINDGKA…ILRSRHQRKS (79 aa)).

The protein belongs to the universal ribosomal protein uL2 family. Part of the 50S ribosomal subunit. Forms a bridge to the 30S subunit in the 70S ribosome.

Its function is as follows. One of the primary rRNA binding proteins. Required for association of the 30S and 50S subunits to form the 70S ribosome, for tRNA binding and peptide bond formation. It has been suggested to have peptidyltransferase activity; this is somewhat controversial. Makes several contacts with the 16S rRNA in the 70S ribosome. The polypeptide is Large ribosomal subunit protein uL2 (Mesorhizobium japonicum (strain LMG 29417 / CECT 9101 / MAFF 303099) (Mesorhizobium loti (strain MAFF 303099))).